The chain runs to 299 residues: Phosphatidylinositol-3-phosphatase (299 aa).

The signal sequence occupies residues 1 to 43 (MLRGIQALSRPLTRVYRALAVIGVLAASLLASWVGAVPQVGLA).

Monomer. SapM interacts with host RAB7 via its C-terminus. The cofactor is a metal cation.

The protein resides in the secreted. It localises to the host cytoplasmic vesicle. The protein localises to the host phagosome. It carries out the reaction a phosphate monoester + H2O = an alcohol + phosphate. The enzyme catalyses a 1,2-diacyl-sn-glycero-3-phospho-(1D-myo-inositol-3-phosphate) + H2O = a 1,2-diacyl-sn-glycero-3-phospho-(1D-myo-inositol) + phosphate. Its activity is regulated as follows. Phosphatase activity is inhibited in vitro by low concentrations of several heavy metals (zinc chloride, sodium molybdate, magnesium chloride, and copper sulfate) and moderately high concentrations (&gt;8 mM) of EDTA. Virulence factor that plays an important role in blocking phagosome-lysosome fusion and thus participates in the intracellular survival of the pathogen. Acts as a phosphatase that dephosphorylates phosphatidylinositol 3-phosphate (PI3P), a membrane trafficking regulatory lipid essential for phagosomal acquisition of lysosomal constituents. Therefore, SapM eliminates PI3P from the phagosomal membrane by catalyzing its hydrolysis, and thus contributes to inhibition of phagosome maturation. Also interferes with autophagy: SapM blocks autophagosome-lysosome fusion in macrophages by binding to the small GTPase RAB7, which prevents RAB7 from being involved in this process and thus negatively regulates autophagy flux. In vitro, displays phosphatase activity with broad specificity; can dephosphorylate a variety of phosphoester substrates, with the highest activity against phosphoenolpyruvate, glycerophosphate, GTP, NADPH, phosphotyrosine and trehalose-6-phosphate. In contrast, the enzyme exhibits poor activity against glucose-6-phosphate, phosphothreonine, and a number of nucleotides (NADP, ATP, AMP, and GMP). This chain is Phosphatidylinositol-3-phosphatase, found in Mycobacterium tuberculosis (strain ATCC 25618 / H37Rv).